The following is a 68-amino-acid chain: Alpha-conotoxin-like Mr1.2 (68 aa).

The first 21 residues, 1 to 21 (MGMRMMFTVFLLVVLATTVVS), serve as a signal peptide directing secretion. Residues 22–48 (FTSDRGSDGRNAAAKDKASDLVALTVK) constitute a propeptide that is removed on maturation. 2 disulfide bridges follow: C50-C56 and C51-C64. The ser-Xaa-Pro motif, crucial for potent interaction with nAChR stretch occupies residues 52-54 (SNP). Asparagine amide is present on N65.

It belongs to the conotoxin A superfamily. Expressed by the venom duct.

It localises to the secreted. Functionally, alpha-conotoxins act on postsynaptic membranes, they bind to the nicotinic acetylcholine receptors (nAChR) and thus inhibit them. In Conus marmoreus (Marble cone), this protein is Alpha-conotoxin-like Mr1.2.